Reading from the N-terminus, the 283-residue chain is S-methyl-5'-thioadenosine phosphorylase (283 aa).

Phosphate is bound at residue Thr18. An N6-acetyllysine modification is found at Lys51. Phosphate-binding positions include 60–61 (RH) and 93–94 (TA). Met196 is a binding site for substrate. Phosphate is bound at residue Thr197. A substrate-binding site is contributed by 220–222 (DYD).

It belongs to the PNP/MTAP phosphorylase family. MTAP subfamily. Homotrimer.

It is found in the cytoplasm. It localises to the nucleus. The enzyme catalyses S-methyl-5'-thioadenosine + phosphate = 5-(methylsulfanyl)-alpha-D-ribose 1-phosphate + adenine. It participates in amino-acid biosynthesis; L-methionine biosynthesis via salvage pathway; S-methyl-5-thio-alpha-D-ribose 1-phosphate from S-methyl-5'-thioadenosine (phosphorylase route): step 1/1. Its function is as follows. Catalyzes the reversible phosphorylation of S-methyl-5'-thioadenosine (MTA) to adenine and 5-methylthioribose-1-phosphate. Involved in the breakdown of MTA, a major by-product of polyamine biosynthesis. Responsible for the first step in the methionine salvage pathway after MTA has been generated from S-adenosylmethionine. Has broad substrate specificity with 6-aminopurine nucleosides as preferred substrates. The sequence is that of S-methyl-5'-thioadenosine phosphorylase from Bos taurus (Bovine).